A 637-amino-acid polypeptide reads, in one-letter code: 1-deoxy-D-xylulose-5-phosphate synthase (637 aa).

Thiamine diphosphate contacts are provided by residues His-75 and 116-118 (AHS). Mg(2+) is bound at residue Asp-147. Residues 148-149 (GA), Asn-177, Tyr-288, and Glu-370 each bind thiamine diphosphate. Asn-177 is a Mg(2+) binding site.

The protein belongs to the transketolase family. DXPS subfamily. Homodimer. Mg(2+) serves as cofactor. Thiamine diphosphate is required as a cofactor.

The catalysed reaction is D-glyceraldehyde 3-phosphate + pyruvate + H(+) = 1-deoxy-D-xylulose 5-phosphate + CO2. The protein operates within metabolic intermediate biosynthesis; 1-deoxy-D-xylulose 5-phosphate biosynthesis; 1-deoxy-D-xylulose 5-phosphate from D-glyceraldehyde 3-phosphate and pyruvate: step 1/1. In terms of biological role, catalyzes the acyloin condensation reaction between C atoms 2 and 3 of pyruvate and glyceraldehyde 3-phosphate to yield 1-deoxy-D-xylulose-5-phosphate (DXP). The sequence is that of 1-deoxy-D-xylulose-5-phosphate synthase from Cupriavidus metallidurans (strain ATCC 43123 / DSM 2839 / NBRC 102507 / CH34) (Ralstonia metallidurans).